Consider the following 255-residue polypeptide: Indole-3-glycerol phosphate synthase (255 aa).

The protein belongs to the TrpC family.

It carries out the reaction 1-(2-carboxyphenylamino)-1-deoxy-D-ribulose 5-phosphate + H(+) = (1S,2R)-1-C-(indol-3-yl)glycerol 3-phosphate + CO2 + H2O. The protein operates within amino-acid biosynthesis; L-tryptophan biosynthesis; L-tryptophan from chorismate: step 4/5. This chain is Indole-3-glycerol phosphate synthase, found in Streptococcus pneumoniae serotype 19F (strain G54).